The primary structure comprises 690 residues: Copper-exporting P-type ATPase B (690 aa).

The Cytoplasmic segment spans residues 1–64 (MHEHDSHGEA…MEDFKKRFYV (64 aa)). The segment at 23-46 (QHHEHHGHEEEHSAHHEKMKHSAD) is disordered. The span at 28–46 (HGHEEEHSAHHEKMKHSAD) shows a compositional bias: basic and acidic residues. The chain crosses the membrane as a helical span at residues 65-85 (STLLTIPILILSPAIQTFLGF). The Extracellular segment spans residues 86–91 (RVEFAG). Residues 92–112 (SLYILFLLSSAVYFYGGYPFL) form a helical membrane-spanning segment. At 113 to 127 (KGIFDELRRRQPGMM) the chain is on the cytoplasmic side. The chain crosses the membrane as a helical span at residues 128–148 (TLIAVAISVAYFYSSAVVFGL). Over 149-151 (KGK) the chain is Extracellular. A helical transmembrane segment spans residues 152-172 (FFFWELATLIDIMLLGHYIEM). The Cytoplasmic segment spans residues 173–303 (RSVLGASRAL…KSRTQDLANR (131 aa)). Residues 304–324 (AALLLTVIALTVGSVTLAIWL) traverse the membrane as a helical segment. Residues 325-336 (AYIADFAFAIER) are Extracellular-facing. A helical transmembrane segment spans residues 337–357 (AVTVMVITCPHALGLAIPLVV). Residues 358–640 (AVSTSLAAKS…RKTYSKMKQN (283 aa)) are Cytoplasmic-facing. Catalysis depends on D389, which acts as the 4-aspartylphosphate intermediate. Phosphate-binding positions include 390 to 391 (KT), 537 to 538 (TG), and K565. Mg(2+) contacts are provided by D583 and D587. Residues 641–661 (LLWATGYNAFAIPLAAGVLYS) traverse the membrane as a helical segment. Topologically, residues 662-663 (AG) are extracellular. The chain crosses the membrane as a helical span at residues 664-684 (ILLSPAVGAILMSLSTVIVAI). Over 685-690 (NARLLR) the chain is Cytoplasmic.

The protein belongs to the cation transport ATPase (P-type) (TC 3.A.3) family. Type IB subfamily.

Its subcellular location is the cell membrane. It catalyses the reaction Cu(2+)(in) + ATP + H2O = Cu(2+)(out) + ADP + phosphate + H(+). Its activity is regulated as follows. Activated by Cu(2+) and to a lesser extent by Ag(+) and Cu(+). Its function is as follows. Involved in copper export. This is Copper-exporting P-type ATPase B (copB) from Archaeoglobus fulgidus (strain ATCC 49558 / DSM 4304 / JCM 9628 / NBRC 100126 / VC-16).